The primary structure comprises 217 residues: Probable GTP-binding protein EngB (217 aa).

In terms of domain architecture, EngB-type G spans serine 37–aspartate 214. GTP contacts are provided by residues glycine 45–serine 52, glycine 72–glutamate 76, aspartate 92–glycine 95, threonine 159–aspartate 162, and threonine 193–serine 195. The Mg(2+) site is built by serine 52 and threonine 74.

Belongs to the TRAFAC class TrmE-Era-EngA-EngB-Septin-like GTPase superfamily. EngB GTPase family. Requires Mg(2+) as cofactor.

In terms of biological role, necessary for normal cell division and for the maintenance of normal septation. This Nitrobacter winogradskyi (strain ATCC 25391 / DSM 10237 / CIP 104748 / NCIMB 11846 / Nb-255) protein is Probable GTP-binding protein EngB.